Here is a 78-residue protein sequence, read N- to C-terminus: Large ribosomal subunit protein bL28 (78 aa).

The interval 1 to 20 is disordered; sequence MSRVCQVTGKRPAVGNNRSH.

The protein belongs to the bacterial ribosomal protein bL28 family.

In Actinobacillus pleuropneumoniae serotype 7 (strain AP76), this protein is Large ribosomal subunit protein bL28.